We begin with the raw amino-acid sequence, 557 residues long: Venom carboxylesterase-6 (557 aa).

The N-terminal stretch at 1–21 (MYMLKLSYILLFLGFVKFSWQ) is a signal peptide. The cysteines at positions 88 and 108 are disulfide-linked. Residue asparagine 145 is glycosylated (N-linked (GlcNAc...) asparagine). The active-site Acyl-ester intermediate is the serine 212. Cysteine 264 and cysteine 275 form a disulfide bridge. The active-site Charge relay system is glutamate 341. A glycan (N-linked (GlcNAc...) asparagine) is linked at asparagine 374. Histidine 464 functions as the Charge relay system in the catalytic mechanism. 3 N-linked (GlcNAc...) asparagine glycosylation sites follow: asparagine 478, asparagine 528, and asparagine 542.

This sequence belongs to the type-B carboxylesterase/lipase family. As to expression, expressed by the venom gland.

The protein localises to the secreted. It carries out the reaction a carboxylic ester + H2O = an alcohol + a carboxylate + H(+). This is Venom carboxylesterase-6 from Apis mellifera (Honeybee).